Reading from the N-terminus, the 300-residue chain is Protein SPEAR4 (300 aa).

Over residues 1–10 (MCSKTSSVSY) the composition is skewed to polar residues. The disordered stretch occupies residues 1-45 (MCSKTSSVSYGNREDDDNYSSLCPKKQKHNNGGKKRVPRRGPGVA). The segment covering 25 to 39 (KKQKHNNGGKKRVPR) has biased composition (basic residues). An SPL motif is present at residues 40–48 (RGPGVAELE). Residues 294–300 (IDLRLKL) carry the EAR motif.

As to quaternary structure, interacts with SPL and SPEAR2. In terms of tissue distribution, expressed in leaves.

Its function is as follows. Adapter-like transcriptional repressor recruiting TPL/TPR coepressors to inhibit TCP transcription factors. May be involved in leaf development. The polypeptide is Protein SPEAR4 (Arabidopsis thaliana (Mouse-ear cress)).